The primary structure comprises 188 residues: dCTP deaminase (188 aa).

DCTP is bound by residues 111 to 116 (KSTYAR), 135 to 137 (TLE), glutamine 156, tyrosine 170, and glutamine 180. Residue glutamate 137 is the Proton donor/acceptor of the active site.

Belongs to the dCTP deaminase family. In terms of assembly, homotrimer.

The catalysed reaction is dCTP + H2O + H(+) = dUTP + NH4(+). It functions in the pathway pyrimidine metabolism; dUMP biosynthesis; dUMP from dCTP (dUTP route): step 1/2. Functionally, catalyzes the deamination of dCTP to dUTP. This is dCTP deaminase from Pseudomonas putida (strain ATCC 700007 / DSM 6899 / JCM 31910 / BCRC 17059 / LMG 24140 / F1).